A 1217-amino-acid chain; its full sequence is Rho family-interacting cell polarization regulator 1 (1217 aa).

At S22 the chain carries Phosphoserine. Residues 83-112 (RGLTAYLEVHQQEQEKLQRQIKESKRNSRL) are a coiled coil. A phosphoserine mark is found at S345 and S347. T351 carries the post-translational modification Phosphothreonine. Residues 371 to 413 (NGTAWSLSSESSDDSSSPQLSGTARYSSTPKPLVQQPEPLPVQ) form a disordered region. Composition is skewed to low complexity over residues 376-391 (SLSSESSDDSSSPQLS) and 400-413 (PKPLVQQPEPLPVQ). A phosphoserine mark is found at S452 and S455. Positions 565–762 (TSTTVGSTHK…SPSSIVPEPQ (198 aa)) are disordered. The span at 579 to 594 (PLTSTGSIPSVTDSIQ) shows a compositional bias: polar residues. Positions 595–649 (TTTSPTHTTPSPTHTTVSPTHSTPSPTHTTVSPSNAALSPSNATPSLSHSTTSPT) are enriched in low complexity. Over residues 650–661 (QKATMSTHTTSA) the composition is skewed to polar residues. Low complexity predominate over residues 664 to 695 (PVQTTTSPISTTVSPSPSVDTAIISSSSAVPS). Polar residues predominate over residues 720–729 (ACTSSPSLAS). S742 is modified (phosphoserine). A coiled-coil region spans residues 786–828 (RRLEEALRTLMAALDDYRGQFPELQGLEQEVTRLESLLMQRQG). The segment at 850–874 (FLNDDEDEDNDSPGDRPTSSPEVVA) is disordered. The span at 852-861 (NDDEDEDNDS) shows a compositional bias: acidic residues. Residues S868 and S869 each carry the phosphoserine modification.

This sequence belongs to the RIPOR family. In terms of assembly, interacts (via N-terminus) with RHOA (GTP-bound form); this interaction links active RHOA to STK24 and STK26 kinases. Interacts with RHOB. Interacts with RHOC. Interacts (via C-terminus) with PDCD10; this interaction occurs in a Rho-independent manner. Interacts (via C-terminus) with STK24; this interaction occurs in a PDCD10-dependent and Rho-independent manner. Interacts (via C-terminus) with STK26; this interaction occurs in a PDCD10-dependent and Rho-independent manner. Interacts (via N-terminus) with 14-3-3 proteins; these interactions occur in a Rho-dependent manner.

It is found in the cytoplasm. The protein resides in the golgi apparatus. Functionally, downstream effector protein for Rho-type small GTPases that plays a role in cell polarity and directional migration. Acts as an adapter protein, linking active Rho proteins to STK24 and STK26 kinases, and hence positively regulates Golgi reorientation in polarized cell migration upon Rho activation. Involved in the subcellular relocation of STK26 from the Golgi to cytoplasm punctae in a Rho- and PDCD10-dependent manner upon serum stimulation. The sequence is that of Rho family-interacting cell polarization regulator 1 from Rattus norvegicus (Rat).